Consider the following 510-residue polypeptide: Histidine ammonia-lyase (510 aa).

The segment at residues 143-145 is a cross-link (5-imidazolinone (Ala-Gly)); the sequence is ASG. Serine 144 bears the 2,3-didehydroalanine (Ser) mark.

It belongs to the PAL/histidase family. Contains an active site 4-methylidene-imidazol-5-one (MIO), which is formed autocatalytically by cyclization and dehydration of residues Ala-Ser-Gly.

The protein localises to the cytoplasm. It catalyses the reaction L-histidine = trans-urocanate + NH4(+). It participates in amino-acid degradation; L-histidine degradation into L-glutamate; N-formimidoyl-L-glutamate from L-histidine: step 1/3. This chain is Histidine ammonia-lyase, found in Yersinia pestis.